The following is a 97-amino-acid chain: Large ribosomal subunit protein bL28 (97 aa).

The protein belongs to the bacterial ribosomal protein bL28 family.

The polypeptide is Large ribosomal subunit protein bL28 (Rickettsia peacockii (strain Rustic)).